Consider the following 489-residue polypeptide: MDTKKIRWFTVAFIAFNMVWGMGNVVNNFAQQGITVVTSWLLILALYFIPYALIVGQLCSTFKDSKGGVSSWVENTSTKRLAYYAAWTYWVVHIPYLAQKPQAILIAFGWVGQGNGNLVSQMSMTAVALISLAIFLAFLWLSTKGLNTLKVIGGLAGTAMFVMSLLFIVMAIGAPFIAKDFHIATPDMGNIKTYIPKFDFSYFTTISMLVFAVGGAEKISPYVNQTKNPAKEFPRGMFLLAGMVGICAVLGSIAMGMIFSSGNLPKDLMANGAYAAFQILGQHFGVGNFLMIVYALTNGVGQIAALAFSIDAPLRILLADADPEYVPAWLRKKTNKGTLKNGYTLTGILVSIIILLPLLGIGDMNELVKWLTNLNSVVMPMRYLWVFFAFIMLNRAVKHFQSEYKFIKQKRLAMIAGAWCFLFTLIACVLGMVPKLDYAANPSAWWFQLASNILTPIVLILLGMLLPFIARREQRKATSLDLDTIVTPD.

12 helical membrane passes run 6–26 (IRWF…GNVV), 36–56 (VVTS…LIVG), 91–111 (VVHI…FGWV), 122–142 (MSMT…LWLS), 152–172 (IGGL…VMAI), 195–215 (IPKF…AVGG), 238–258 (FLLA…MGMI), 290–310 (LMIV…AFSI), 342–362 (GYTL…LGIG), 373–393 (NLNS…FIML), 413–433 (AMIA…LGMV), and 449–469 (LASN…LPFI).

It belongs to the amino acid-polyamine-organocation (APC) superfamily. Glutamate:GABA antiporter (GGA) (TC 2.A.3.7) family.

The protein localises to the cell membrane. Functionally, involved in aspartate and glutamate uptake. Plays no significant role in the excretion of accumulated glutamate. The polypeptide is Aspartate/glutamate permease AcaP (Lactococcus lactis subsp. cremoris (strain MG1363)).